The following is a 702-amino-acid chain: Ribosomal RNA large subunit methyltransferase K/L (702 aa).

Residues 43-154 (LIYQSLMWSR…KETASIALDL (112 aa)) form the THUMP domain.

Belongs to the methyltransferase superfamily. RlmKL family.

The protein resides in the cytoplasm. The catalysed reaction is guanosine(2445) in 23S rRNA + S-adenosyl-L-methionine = N(2)-methylguanosine(2445) in 23S rRNA + S-adenosyl-L-homocysteine + H(+). It catalyses the reaction guanosine(2069) in 23S rRNA + S-adenosyl-L-methionine = N(2)-methylguanosine(2069) in 23S rRNA + S-adenosyl-L-homocysteine + H(+). Its function is as follows. Specifically methylates the guanine in position 2445 (m2G2445) and the guanine in position 2069 (m7G2069) of 23S rRNA. In Salmonella arizonae (strain ATCC BAA-731 / CDC346-86 / RSK2980), this protein is Ribosomal RNA large subunit methyltransferase K/L.